The chain runs to 260 residues: Hydroxyethylthiazole kinase 1 (260 aa).

Met-39 lines the substrate pocket. Positions 115 and 160 each coordinate ATP. Gly-187 serves as a coordination point for substrate.

It belongs to the Thz kinase family. Mg(2+) is required as a cofactor.

The catalysed reaction is 5-(2-hydroxyethyl)-4-methylthiazole + ATP = 4-methyl-5-(2-phosphooxyethyl)-thiazole + ADP + H(+). Its pathway is cofactor biosynthesis; thiamine diphosphate biosynthesis; 4-methyl-5-(2-phosphoethyl)-thiazole from 5-(2-hydroxyethyl)-4-methylthiazole: step 1/1. Catalyzes the phosphorylation of the hydroxyl group of 4-methyl-5-beta-hydroxyethylthiazole (THZ). In Streptococcus pneumoniae (strain P1031), this protein is Hydroxyethylthiazole kinase 1.